Reading from the N-terminus, the 146-residue chain is Hemoglobin subunit beta-1 (146 aa).

Residues 2–146 (GLTAHDRQLI…IADALGKGYH (145 aa)) enclose the Globin domain. Residues H63 and H92 each contribute to the heme b site.

This sequence belongs to the globin family. As to quaternary structure, heterotetramer of two alpha chains and two beta chains. Red blood cells.

Functionally, involved in oxygen transport from the lung to the various peripheral tissues. This is Hemoglobin subunit beta-1 (hbb1) from Xenopus laevis (African clawed frog).